Consider the following 915-residue polypeptide: Protein inturned (915 aa).

Residues 88 to 144 (NAKRQANSSNKSEAKLKKLTKILRRKRRPSQRKAEGKDSSQRPASILKNQAGQRPGV) are disordered. A compositionally biased stretch (basic residues) spans 104–118 (KKLTKILRRKRRPSQ). A compositionally biased stretch (polar residues) spans 128-139 (QRPASILKNQAG). The PDZ domain maps to 165 to 253 (SVSSSSADRG…PMQVRLTLET (89 aa)). The disordered stretch occupies residues 688–738 (GIRGRRASPQRSQSDSGSEGHADGTPASVARRDSLGSGGSDGSLGSAGFLK).

The protein belongs to the inturned family.

The protein resides in the cytoplasm. Its subcellular location is the cell surface. The protein localises to the cytoskeleton. It localises to the cilium basal body. Functionally, plays a key role in ciliogenesis and embryonic development. Regulator of cilia formation by controlling the organization of the apical actin cytoskeleton and the positioning of the basal bodies at the apical cell surface, which in turn is essential for the normal orientation of elongating ciliary microtubules. Plays a key role in definition of cell polarity via its role in ciliogenesis but not via conversion extension. Has an indirect effect on hedgehog signaling. This chain is Protein inturned (intu), found in Danio rerio (Zebrafish).